Here is a 300-residue protein sequence, read N- to C-terminus: Cation-efflux pump FieF (300 aa).

The next 6 helical transmembrane spans lie at 12–32, 39–59, 82–102, 114–134, 151–171, and 172–192; these read AAIA…FAWW, ILAA…NLLV, AALA…LTGI, PGVG…LVSF, MLHY…LALS, and WYGW…YILY. 2 residues coordinate Zn(2+): Asp-45 and Asp-49. His-153 and Asp-157 together coordinate Zn(2+).

The protein belongs to the cation diffusion facilitator (CDF) transporter (TC 2.A.4) family. FieF subfamily. In terms of assembly, homodimer.

The protein localises to the cell inner membrane. It catalyses the reaction Zn(2+)(in) + H(+)(out) = Zn(2+)(out) + H(+)(in). The enzyme catalyses Cd(2+)(in) + H(+)(out) = Cd(2+)(out) + H(+)(in). It carries out the reaction Fe(2+)(in) + H(+)(out) = Fe(2+)(out) + H(+)(in). In terms of biological role, divalent metal cation transporter which exports Zn(2+), Cd(2+) and possibly Fe(2+). May be involved in zinc and iron detoxification by efflux. In Escherichia fergusonii (strain ATCC 35469 / DSM 13698 / CCUG 18766 / IAM 14443 / JCM 21226 / LMG 7866 / NBRC 102419 / NCTC 12128 / CDC 0568-73), this protein is Cation-efflux pump FieF.